The chain runs to 378 residues: Erythronate-4-phosphate dehydrogenase (378 aa).

Serine 45 and threonine 66 together coordinate substrate. NAD(+) contacts are provided by aspartate 146 and threonine 175. The active site involves arginine 208. Aspartate 232 contributes to the NAD(+) binding site. Residue glutamate 237 is part of the active site. Histidine 254 acts as the Proton donor in catalysis. Glycine 257 serves as a coordination point for NAD(+). Tyrosine 258 is a binding site for substrate.

It belongs to the D-isomer specific 2-hydroxyacid dehydrogenase family. PdxB subfamily. As to quaternary structure, homodimer.

The protein resides in the cytoplasm. It carries out the reaction 4-phospho-D-erythronate + NAD(+) = (R)-3-hydroxy-2-oxo-4-phosphooxybutanoate + NADH + H(+). Its pathway is cofactor biosynthesis; pyridoxine 5'-phosphate biosynthesis; pyridoxine 5'-phosphate from D-erythrose 4-phosphate: step 2/5. In terms of biological role, catalyzes the oxidation of erythronate-4-phosphate to 3-hydroxy-2-oxo-4-phosphonooxybutanoate. The protein is Erythronate-4-phosphate dehydrogenase of Escherichia coli O17:K52:H18 (strain UMN026 / ExPEC).